Consider the following 126-residue polypeptide: UPF0538 protein C2orf76 homolog (126 aa).

It belongs to the UPF0538 family.

In Mus musculus (Mouse), this protein is UPF0538 protein C2orf76 homolog.